The primary structure comprises 184 residues: UPF0301 protein Sden_2674 (184 aa).

The protein belongs to the UPF0301 (AlgH) family.

The protein is UPF0301 protein Sden_2674 of Shewanella denitrificans (strain OS217 / ATCC BAA-1090 / DSM 15013).